Here is a 350-residue protein sequence, read N- to C-terminus: Protein-glutamate methylesterase/protein-glutamine glutaminase (350 aa).

Residues 5–122 (RVLSVDDSAL…REGMLAYSEM (118 aa)) enclose the Response regulatory domain. Asp-56 is modified (4-aspartylphosphate). The region spanning 152–338 (LLSSEKLLVI…DLSQVVSQQM (187 aa)) is the CheB-type methylesterase domain. Catalysis depends on residues Ser-164, His-190, and Asp-286.

Belongs to the CheB family. In terms of processing, phosphorylated by CheA. Phosphorylation of the N-terminal regulatory domain activates the methylesterase activity.

Its subcellular location is the cytoplasm. It carries out the reaction [protein]-L-glutamate 5-O-methyl ester + H2O = L-glutamyl-[protein] + methanol + H(+). The enzyme catalyses L-glutaminyl-[protein] + H2O = L-glutamyl-[protein] + NH4(+). Its function is as follows. Involved in chemotaxis. Part of a chemotaxis signal transduction system that modulates chemotaxis in response to various stimuli. Catalyzes the demethylation of specific methylglutamate residues introduced into the chemoreceptors (methyl-accepting chemotaxis proteins or MCP) by CheR. Also mediates the irreversible deamidation of specific glutamine residues to glutamic acid. The sequence is that of Protein-glutamate methylesterase/protein-glutamine glutaminase from Enterobacter cloacae.